The sequence spans 277 residues: Pantothenate synthetase (277 aa).

26-33 (MGNLHEGH) contacts ATP. The active-site Proton donor is the His-33. A (R)-pantoate-binding site is contributed by Gln-57. A beta-alanine-binding site is contributed by Gln-57. 144–147 (GKKD) serves as a coordination point for ATP. Gln-150 lines the (R)-pantoate pocket. Residues Gly-173 and 181 to 184 (LSSR) each bind ATP.

It belongs to the pantothenate synthetase family. As to quaternary structure, homodimer.

The protein localises to the cytoplasm. The enzyme catalyses (R)-pantoate + beta-alanine + ATP = (R)-pantothenate + AMP + diphosphate + H(+). It participates in cofactor biosynthesis; (R)-pantothenate biosynthesis; (R)-pantothenate from (R)-pantoate and beta-alanine: step 1/1. Its function is as follows. Catalyzes the condensation of pantoate with beta-alanine in an ATP-dependent reaction via a pantoyl-adenylate intermediate. The chain is Pantothenate synthetase from Laribacter hongkongensis (strain HLHK9).